The following is a 479-amino-acid chain: Aspartyl/glutamyl-tRNA(Asn/Gln) amidotransferase subunit B (479 aa).

This sequence belongs to the GatB/GatE family. GatB subfamily. As to quaternary structure, heterotrimer of A, B and C subunits.

The catalysed reaction is L-glutamyl-tRNA(Gln) + L-glutamine + ATP + H2O = L-glutaminyl-tRNA(Gln) + L-glutamate + ADP + phosphate + H(+). It catalyses the reaction L-aspartyl-tRNA(Asn) + L-glutamine + ATP + H2O = L-asparaginyl-tRNA(Asn) + L-glutamate + ADP + phosphate + 2 H(+). Functionally, allows the formation of correctly charged Asn-tRNA(Asn) or Gln-tRNA(Gln) through the transamidation of misacylated Asp-tRNA(Asn) or Glu-tRNA(Gln) in organisms which lack either or both of asparaginyl-tRNA or glutaminyl-tRNA synthetases. The reaction takes place in the presence of glutamine and ATP through an activated phospho-Asp-tRNA(Asn) or phospho-Glu-tRNA(Gln). In Streptococcus pyogenes serotype M1, this protein is Aspartyl/glutamyl-tRNA(Asn/Gln) amidotransferase subunit B.